The following is a 619-amino-acid chain: ATP-dependent RNA helicase dbp9 (619 aa).

The tract at residues 1 to 30 (MKRKLDANDVPSTEVAEEKETKDADNTDFE) is disordered. Basic and acidic residues predominate over residues 16–25 (AEEKETKDAD). The Q motif motif lies at 27-55 (TDFESLNLDPRLRQALIREQFTKPTPVQS). The region spanning 58–236 (IPLALEGKDI…GLFCRSPVIL (179 aa)) is the Helicase ATP-binding domain. An ATP-binding site is contributed by 71 to 78 (AKTGSGKT). The DEAD box signature appears at 184–187 (DEAD). In terms of domain architecture, Helicase C-terminal spans 247–484 (GISQFVVRCA…EVKPYHFEMK (238 aa)). Disordered stretches follow at residues 339-390 (SRTS…GKAK) and 582-619 (GDNR…RGRK). Positions 345–362 (KSKEATDGDDEAKDKMGS) are enriched in basic and acidic residues. Over residues 587–604 (RKAREKNRGKGKGRKPSG) the composition is skewed to basic residues.

The protein belongs to the DEAD box helicase family. DDX56/DBP9 subfamily.

It is found in the nucleus. It localises to the nucleolus. The catalysed reaction is ATP + H2O = ADP + phosphate + H(+). Functionally, ATP-binding RNA helicase involved in the biogenesis of 60S ribosomal subunits and is required for the normal formation of 25S and 5.8S rRNAs. In Neosartorya fischeri (strain ATCC 1020 / DSM 3700 / CBS 544.65 / FGSC A1164 / JCM 1740 / NRRL 181 / WB 181) (Aspergillus fischerianus), this protein is ATP-dependent RNA helicase dbp9 (dbp9).